Here is a 142-residue protein sequence, read N- to C-terminus: Large ribosomal subunit protein uL11 (142 aa).

Belongs to the universal ribosomal protein uL11 family. In terms of assembly, part of the ribosomal stalk of the 50S ribosomal subunit. Interacts with L10 and the large rRNA to form the base of the stalk. L10 forms an elongated spine to which L12 dimers bind in a sequential fashion forming a multimeric L10(L12)X complex. Post-translationally, one or more lysine residues are methylated.

Its function is as follows. Forms part of the ribosomal stalk which helps the ribosome interact with GTP-bound translation factors. The sequence is that of Large ribosomal subunit protein uL11 from Xylella fastidiosa (strain Temecula1 / ATCC 700964).